Reading from the N-terminus, the 880-residue chain is Kinesin heavy chain (880 aa).

The 324-residue stretch at Ser-4 to Ile-327 folds into the Kinesin motor domain. Residues Gly-85 to Ser-92 and Gly-235 to Thr-242 each bind ATP. The interval Val-388–Ile-426 is disordered. The span at Pro-399–Ala-408 shows a compositional bias: polar residues. Positions Ile-428–Arg-849 form a coiled coil.

It belongs to the TRAFAC class myosin-kinesin ATPase superfamily. Kinesin family. Kinesin subfamily.

The protein resides in the cytoplasm. It localises to the cytoskeleton. Kinesin is a microtubule-associated force-producing protein that may play a role in organelle transport. Its motor activity is directed toward the microtubule's plus end. The chain is Kinesin heavy chain (klp1) from Botryotinia fuckeliana (Noble rot fungus).